We begin with the raw amino-acid sequence, 348 residues long: Centromere protein N-A (348 aa).

The protein belongs to the CENP-N/CHL4 family.

It localises to the nucleus. The protein resides in the chromosome. Its subcellular location is the centromere. In terms of biological role, probable component of a centromeric complex involved in assembly of kinetochore proteins, mitotic progression and chromosome segregation. In Xenopus laevis (African clawed frog), this protein is Centromere protein N-A (cenpn-a).